Reading from the N-terminus, the 708-residue chain is Exocyst complex component 8 (708 aa).

Residues 168–268 (YLVYNGDLLE…WLEVLEETKR (101 aa)) form the PH domain. Basic and acidic residues predominate over residues 271-282 (ALSEKRRLEQEA). The tract at residues 271–314 (ALSEKRRLEQEALPRPAPTPPESTNPFEEEEEEEEEPSAEEEAV) is disordered. The segment covering 297-314 (FEEEEEEEEEPSAEEEAV) has biased composition (acidic residues).

This sequence belongs to the EXO84 family. As to quaternary structure, the exocyst complex is composed of EXOC1, EXOC2, EXOC3, EXOC4, EXOC5, EXOC6, EXOC7 and EXOC8.

It is found in the cytoplasm. It localises to the perinuclear region. The protein resides in the cell projection. Its subcellular location is the growth cone. Functionally, component of the exocyst complex involved in the docking of exocytic vesicles with fusion sites on the plasma membrane. The sequence is that of Exocyst complex component 8 (EXOC8) from Gallus gallus (Chicken).